Consider the following 659-residue polypeptide: MAQAHKESVLAAACVRTPVNPYTKAPLALYERELGERQQQRTASVSPQRLPRTSMGTPAAPAAALDWEEARCCKSRRCQDWVFDISKVHHPDKDYYVQVEKLKKAHLQNMEQLEKMYDKKLHLSGVHNPENEQGVVREVYRSAWEPKSVLPAEYDDKYLKHSLSGSVSPSLSESSHESTNGDSSDSEHSVSARNKILDMWNEFTVEDYIRNSEYFSKEIAKNKTSKKSKEWSHKITIPEPFQMTIRESKKKEMNIKSKSEIELENNLLKKKLEEEAECQKKFRANPVPSSVYLPLYQEIVERNEERRSFVKEKSKDILLATQKPFQFIEREERKKTLRLDFMNLSTSVPSANHFKAKPVPKSIYGTSTAERLKEEELYRGIRIHMRAQELLQNSSYPTITLAPGAHSGTKKGKCYKPKEKQKHKPKISATIPHSQTMHENQQKRLPESTSTKHVTVCEPFQLRTSNIPSHKEKIIMDIQADEENLKETRWPYKSPRAQARIHSSAGTLNPQGEALCNIPRSTELSKRREHAIRKREKQRTKDYMKELEAMEQRVLNKPLLIERVAQRNALMSAEKQYLNVLRDLGLSEEFVSKNGQSASVDEHVSVREENNPRAESTEGTLVLEDLLDDAEKYQTDPESEEAQEEDAYSTDEDHSMEEI.

Positions 34–59 are disordered; the sequence is LGERQQQRTASVSPQRLPRTSMGTPA. The stretch at 96 to 120 forms a coiled coil; sequence YVQVEKLKKAHLQNMEQLEKMYDKK. Disordered regions lie at residues 165-190 and 401-428; these read GSVS…EHSV and LAPG…PKIS. Basic residues predominate over residues 408 to 426; sequence GTKKGKCYKPKEKQKHKPK. The stretch at 531-557 forms a coiled coil; it reads AIRKREKQRTKDYMKELEAMEQRVLNK. Residues 594–659 are disordered; that stretch reads NGQSASVDEH…TDEDHSMEEI (66 aa). Residues 600–616 show a composition bias toward basic and acidic residues; it reads VDEHVSVREENNPRAES. Acidic residues predominate over residues 637-650; that stretch reads PESEEAQEEDAYST.

The protein belongs to the FAM161 family.

The protein resides in the cytoplasm. It is found in the cytoskeleton. It localises to the cilium basal body. Its subcellular location is the cell projection. The protein localises to the cilium. The protein resides in the microtubule organizing center. It is found in the centrosome. It localises to the centriole. Functionally, involved in ciliogenesis. The protein is Protein FAM161A (fam161a) of Xenopus tropicalis (Western clawed frog).